A 74-amino-acid polypeptide reads, in one-letter code: Imcroporin (74 aa).

Positions 1–22 (MKFQYLLAVFLIVLVVTDHCQA) are cleaved as a signal peptide. Lys39 is modified (lysine amide; partial). The propeptide occupies 45–74 (QLEARFEPKQRNFRKRELDFEKLFANMPDY).

It belongs to the non-disulfide-bridged peptide (NDBP) superfamily. Short antimicrobial peptide (group 4) family. In terms of tissue distribution, expressed by the venom gland.

Its subcellular location is the secreted. The protein localises to the target cell membrane. Functionally, has potent antibacterial activity against Gram-positive bacteria M.luteus, B.thuringiensis, S.aureus and B.subtilis, but not Gram-negative bacteria. Shows a weak cytotoxicity effect against mammalian cell lines and relatively low hemolytic activity against human erythrocytes. In Isometrus maculatus (Lesser brown scorpion), this protein is Imcroporin.